The sequence spans 194 residues: Phosphoheptose isomerase (194 aa).

The region spanning 37–194 (ISNSFKQGGK…LIEFEMAKQA (158 aa)) is the SIS domain. Residue 52 to 54 (NGG) participates in substrate binding. Zn(2+) is bound by residues His-61 and Glu-65. Substrate-binding positions include Glu-65, 93–94 (ND), 119–121 (STS), Ser-124, and Gln-172. 2 residues coordinate Zn(2+): Gln-172 and His-180.

It belongs to the SIS family. GmhA subfamily. As to quaternary structure, homotetramer. The cofactor is Zn(2+).

The protein localises to the cytoplasm. The enzyme catalyses 2 D-sedoheptulose 7-phosphate = D-glycero-alpha-D-manno-heptose 7-phosphate + D-glycero-beta-D-manno-heptose 7-phosphate. It participates in carbohydrate biosynthesis; D-glycero-D-manno-heptose 7-phosphate biosynthesis; D-glycero-alpha-D-manno-heptose 7-phosphate and D-glycero-beta-D-manno-heptose 7-phosphate from sedoheptulose 7-phosphate: step 1/1. Catalyzes the isomerization of sedoheptulose 7-phosphate in D-glycero-D-manno-heptose 7-phosphate. The sequence is that of Phosphoheptose isomerase from Haemophilus influenzae (strain 86-028NP).